The chain runs to 301 residues: Ubiquitin thioesterase OTU1 (301 aa).

The UBX-like stretch occupies residues 5–83 (RCKAKNGTHL…IVEEEKNKPK (79 aa)). The OTU domain occupies 102 to 227 (VERRVVPADN…GIHYDPLQKV (126 aa)). Residues 107–113 (VPADNSC) form a cys-loop region. Asp-110 is an active-site residue. Cys-113 serves as the catalytic Nucleophile. A variable-loop region spans residues 166–176 (IRRDDTWGGAI). A his-loop region spans residues 216–220 (YDGIH). Residue Ile-219 coordinates substrate. Residue His-220 is part of the active site. The S2 site stretch occupies residues 244–249 (DVILAQ). Residues 271-295 (LRCMVCQTGLVGQKEAREHAKETGH) form a C2H2-type zinc finger. His-295 is a catalytic residue.

The protein resides in the cytoplasm. It catalyses the reaction Thiol-dependent hydrolysis of ester, thioester, amide, peptide and isopeptide bonds formed by the C-terminal Gly of ubiquitin (a 76-residue protein attached to proteins as an intracellular targeting signal).. In terms of biological role, hydrolase that can remove conjugated ubiquitin from proteins and participates in endoplasmic reticulum-associated degradation (ERAD) for misfolded lumenal proteins. May act by triming the ubiquitin chain on the associated substrate to facilitate their threading through the VCP/p97 pore. Ubiquitin moieties on substrates may present a steric impediment to the threading process when the substrate is transferred to the VCP pore and threaded through VCP's axial channel. Mediates deubiquitination of 'Lys-27'-, 'Lys-29'- and 'Lys-33'-linked polyubiquitin chains. Also able to hydrolyze 'Lys-11'-linked ubiquitin chains. Cleaves both polyubiquitin and di-ubiquitin. The chain is Ubiquitin thioesterase OTU1 (yod1) from Danio rerio (Zebrafish).